Consider the following 180-residue polypeptide: Shikimate kinase (180 aa).

14-19 contributes to the ATP binding site; that stretch reads GAGKST. Ser-18 contacts Mg(2+). Residues Asp-36, Arg-60, and Gly-82 each contribute to the substrate site. Arg-120 contributes to the ATP binding site. Residue Arg-140 participates in substrate binding. Gln-157 lines the ATP pocket.

This sequence belongs to the shikimate kinase family. As to quaternary structure, monomer. Mg(2+) is required as a cofactor.

The protein resides in the cytoplasm. The enzyme catalyses shikimate + ATP = 3-phosphoshikimate + ADP + H(+). Its pathway is metabolic intermediate biosynthesis; chorismate biosynthesis; chorismate from D-erythrose 4-phosphate and phosphoenolpyruvate: step 5/7. Catalyzes the specific phosphorylation of the 3-hydroxyl group of shikimic acid using ATP as a cosubstrate. The chain is Shikimate kinase from Haemophilus influenzae (strain PittGG).